A 483-amino-acid polypeptide reads, in one-letter code: MFS-type transporter ppzB (483 aa).

5 helical membrane-spanning segments follow: residues 18–38 (FILTTVAMGLFTDLVLYGILL), 62–82 (AFLATYAGASVFFSVPAGWAA), 96–116 (MFLVVATAIFAFSTSLVLLVV), 149–169 (IGTIFATISVGELAAPVLGGV), and 178–198 (AVFAVSAVLLAIDLALRALVI). N-linked (GlcNAc...) asparagine glycosylation is present at Asn219. The next 6 membrane-spanning stretches (helical) occupy residues 281-301 (LAMLLSFVQALFIGTFDATVP), 310-330 (FSSLQVGLVFIALMLPYFALG), 344-364 (AAATSGYAFLVPCLMLLGLPE), 374-394 (VALFCTILALNGIGLAVVTSP), 424-444 (FGFSSLYFFTGLAVGPLLGGF), and 453-473 (VMGAVYAAISGVTAIVSFLFV).

This sequence belongs to the major facilitator superfamily. TCR/Tet family.

It localises to the membrane. In terms of biological role, MFS-type transporter; part of the gene cluster that mediates the biosynthesis of pyrrolopyrazines, secondary metabolites showing insecticidal activity. Probably involved in the secretion of peramine and other pyrrolopyrazines. This is MFS-type transporter ppzB from Metarhizium rileyi (strain RCEF 4871) (Nomuraea rileyi).